A 360-amino-acid polypeptide reads, in one-letter code: Neutral protease 2 homolog SS1G_13741 (360 aa).

An N-linked (GlcNAc...) asparagine glycan is attached at asparagine 129. Cystine bridges form between cysteine 189-cysteine 261 and cysteine 268-cysteine 286. Histidine 311 contributes to the Zn(2+) binding site. Glutamate 312 is an active-site residue. Residues histidine 315 and aspartate 326 each contribute to the Zn(2+) site.

The protein belongs to the peptidase M35 family. Zn(2+) serves as cofactor.

It localises to the secreted. It carries out the reaction Preferential cleavage of bonds with hydrophobic residues in P1'. Also 3-Asn-|-Gln-4 and 8-Gly-|-Ser-9 bonds in insulin B chain.. Secreted metalloproteinase that allows assimilation of proteinaceous substrates. Shows high activities on basic nuclear substrates such as histone and protamine. This is Neutral protease 2 homolog SS1G_13741 from Sclerotinia sclerotiorum (strain ATCC 18683 / 1980 / Ss-1) (White mold).